The following is a 537-amino-acid chain: O-phosphoserine--tRNA(Cys) ligase (537 aa).

Substrate contacts are provided by residues 186 to 188 (HMT), 231 to 233 (SAS), 273 to 274 (YY), and asparagine 317.

Belongs to the class-II aminoacyl-tRNA synthetase family. O-phosphoseryl-tRNA(Cys) synthetase subfamily. Homotetramer. Interacts with SepCysS.

The enzyme catalyses tRNA(Cys) + O-phospho-L-serine + ATP = O-phospho-L-seryl-tRNA(Cys) + AMP + diphosphate. Functionally, catalyzes the attachment of O-phosphoserine (Sep) to tRNA(Cys). The sequence is that of O-phosphoserine--tRNA(Cys) ligase from Methanococcus vannielii (strain ATCC 35089 / DSM 1224 / JCM 13029 / OCM 148 / SB).